Here is an 875-residue protein sequence, read N- to C-terminus: F-box only protein 41 (875 aa).

Disordered stretches follow at residues 85-110 (ESTS…HHHH), 165-194 (SSAC…PSPA), and 347-542 (SSSC…PSRS). Over residues 170–182 (TPPPGPGPGPCPG) the composition is skewed to pro residues. Residues 183-194 (PASASPASPSPA) are compositionally biased toward low complexity. Residues 209-351 (ALEKLEVDRR…QLQVISSSCG (143 aa)) are a coiled coil. Polar residues predominate over residues 347-356 (SSSCGSTPSA). Residues 359–368 (GRGGGGGGAG) show a composition bias toward gly residues. Residue Arg-360 is modified to Omega-N-methylarginine. The segment covering 395-416 (HGSSPSTGASSRVPAASQSSGC) has biased composition (polar residues). Ser-478 is modified (phosphoserine). Phosphothreonine is present on Thr-479. The F-box domain maps to 496 to 540 (SEAEGPLDAPRPGPAMAGPLSSCRLSARPEGGSGRGRRAERVSPS). Residue Ser-762 is modified to Phosphoserine.

As to quaternary structure, directly interacts with SKP1 and CUL1.

Substrate-recognition component of the SCF (SKP1-CUL1-F-box protein)-type E3 ubiquitin ligase complex. The chain is F-box only protein 41 (FBXO41) from Homo sapiens (Human).